A 352-amino-acid chain; its full sequence is UPF0324 membrane protein BCE_5279 (352 aa).

Helical transmembrane passes span 25-47 (FGFSQGIGITLLIAIVAKYLAEL), 52-71 (IMGQLVIAILIGMVWRAAIG), 111-130 (VLVIAAVVITFTIFVVYGLT), 140-162 (GILTACGTAICGAAAVVAIAPQV), 169-191 (TAVGAAIIAILGTIFTLIYTLLY), 201-223 (YGVFSGATLHEIAHVIAAAAPGG), 230-252 (AVIVKLTRVAMLVPVAILIGLWF), 267-289 (LPIPWFIFGFLAMSAVHSLGIIP), 291-313 (VVAGYIVVIAYMLIAMAMAGLGL), and 328-350 (FVAGLIGSVCLSVLGYVLVYALG).

This sequence belongs to the UPF0324 family.

The protein localises to the cell membrane. The chain is UPF0324 membrane protein BCE_5279 from Bacillus cereus (strain ATCC 10987 / NRS 248).